Consider the following 331-residue polypeptide: Cytoskeleton protein RodZ (331 aa).

The Cytoplasmic segment spans residues 1–111; the sequence is MNTEATQDHQ…LGKRRKKRDG (111 aa). Residues 19–71 form the HTH cro/C1-type domain; the sequence is LRHAREQLGLSQQAVAERLCLKVSTVRDIEDDKAPADLASTFLRGYIRSYARL. The segment at residues 30–49 is a DNA-binding region (H-T-H motif); it reads QQAVAERLCLKVSTVRDIED. A helical; Signal-anchor for type II membrane protein membrane pass occupies residues 112–132; it reads WLMSFTWLVLFVVIGLSGAWW. Over 133-331 the chain is Periplasmic; it reads WQDHKAQQEE…TLNAESSPAQ (199 aa). Residues 146–166 are compositionally biased toward polar residues; that stretch reads MADQSSAELNGGDANSQNVPL. A disordered region spans residues 146-238; it reads MADQSSAELN…ASPLPTDQAN (93 aa). Low complexity-rich tracts occupy residues 167-202 and 216-234; these read DTSA…TPAD and TAGT…PLPT.

This sequence belongs to the RodZ family.

Its subcellular location is the cell inner membrane. In terms of biological role, cytoskeletal protein that is involved in cell-shape control through regulation of the length of the long axis. This chain is Cytoskeleton protein RodZ, found in Klebsiella pneumoniae subsp. pneumoniae (strain ATCC 700721 / MGH 78578).